The following is a 156-amino-acid chain: Ribosomal RNA large subunit methyltransferase H (156 aa).

Residues Leu-74, Gly-105, and 124–129 (LSKLTL) each bind S-adenosyl-L-methionine.

This sequence belongs to the RNA methyltransferase RlmH family. Homodimer.

The protein localises to the cytoplasm. The catalysed reaction is pseudouridine(1915) in 23S rRNA + S-adenosyl-L-methionine = N(3)-methylpseudouridine(1915) in 23S rRNA + S-adenosyl-L-homocysteine + H(+). In terms of biological role, specifically methylates the pseudouridine at position 1915 (m3Psi1915) in 23S rRNA. This chain is Ribosomal RNA large subunit methyltransferase H, found in Legionella pneumophila (strain Lens).